A 135-amino-acid chain; its full sequence is Mini-ribonuclease 3 (135 aa).

Aspartate 17 is a catalytic residue.

Belongs to the MrnC RNase family. Homodimer. The cofactor is Mg(2+).

It is found in the cytoplasm. Involved in correct processing of both the 5' and 3' ends of 23S rRNA precursor. Processes 30S rRNA precursor transcript even in absence of ribonuclease 3 (Rnc); Rnc processes 30S rRNA into smaller rRNA precursors. The polypeptide is Mini-ribonuclease 3 (Bacillus cereus (strain ATCC 14579 / DSM 31 / CCUG 7414 / JCM 2152 / NBRC 15305 / NCIMB 9373 / NCTC 2599 / NRRL B-3711)).